The chain runs to 193 residues: ATP-dependent Clp protease proteolytic subunit 1 (193 aa).

S99 serves as the catalytic Nucleophile. H124 is an active-site residue.

This sequence belongs to the peptidase S14 family. As to quaternary structure, fourteen ClpP subunits assemble into 2 heptameric rings which stack back to back to give a disk-like structure with a central cavity, resembling the structure of eukaryotic proteasomes.

The protein localises to the cytoplasm. It carries out the reaction Hydrolysis of proteins to small peptides in the presence of ATP and magnesium. alpha-casein is the usual test substrate. In the absence of ATP, only oligopeptides shorter than five residues are hydrolyzed (such as succinyl-Leu-Tyr-|-NHMec, and Leu-Tyr-Leu-|-Tyr-Trp, in which cleavage of the -Tyr-|-Leu- and -Tyr-|-Trp bonds also occurs).. Functionally, cleaves peptides in various proteins in a process that requires ATP hydrolysis. Has a chymotrypsin-like activity. Plays a major role in the degradation of misfolded proteins. This chain is ATP-dependent Clp protease proteolytic subunit 1, found in Shouchella clausii (strain KSM-K16) (Alkalihalobacillus clausii).